Reading from the N-terminus, the 534-residue chain is Putative fimbrium tip subunit Fim1C (534 aa).

A signal peptide spans 1–21 (MKQYKLMQVALLAILLFGWAG). Residue C22 is the site of N-palmitoyl cysteine attachment. The S-diacylglycerol cysteine moiety is linked to residue C22. A propeptide spanning residues 22–54 (CSQNEEEVPGNVRNGIVLNVTDTGIISNEPSTR) is cleaved from the precursor.

The protein belongs to the bacteroidetes fimbrillin superfamily. Mfa-like family. As to quaternary structure, may be part of the fimbrial tip.

It is found in the fimbrium. It localises to the cell outer membrane. In terms of biological role, probably a component of the fimbrium tip. Fimbriae are filamentous appendages on the cell surface that mediate cell adhesion and biofilm formation. The protein is Putative fimbrium tip subunit Fim1C of Bacteroides ovatus (strain ATCC 8483 / DSM 1896 / JCM 5824 / BCRC 10623 / CCUG 4943 / NCTC 11153).